A 330-amino-acid polypeptide reads, in one-letter code: Free fatty acid receptor 2 (330 aa).

Residues 1-8 (MTPDWHSS) lie on the Extracellular side of the membrane. The chain crosses the membrane as a helical span at residues 9 to 29 (LILTAYILIFLTGLPANLLAL). The Cytoplasmic portion of the chain corresponds to 30-43 (RAFVSRVRQPQPAP). The chain crosses the membrane as a helical span at residues 44-64 (VHILLLNLTLADLLLLLLLPF). Topologically, residues 65–79 (RIVEAASNFRWYLPK) are extracellular. The chain crosses the membrane as a helical span at residues 80-100 (IVCALTGFGFYSSIYCSTWLL). The Cytoplasmic portion of the chain corresponds to 101-126 (AGISIERYLGVAFPVQYKLSRRPLYG). The helical transmembrane segment at 127–147 (VIAALVAWIMSFGHCTIVIIV) threads the bilayer. Over 148–184 (QYLNSTEQVGTENQITCYENFTQAQLDVVLPVRLELC) the chain is Extracellular. N-linked (GlcNAc...) asparagine glycosylation is found at asparagine 151 and asparagine 167. Residues 185 to 205 (LVLFFVPMTVTIFCYWRFVWI) traverse the membrane as a helical segment. Residues 206–219 (MLTQPHVGAQRRRR) lie on the Cytoplasmic side of the membrane. The helical transmembrane segment at 220–240 (AVGLAVVTLLNFLVCFGPYNM) threads the bilayer. The Extracellular segment spans residues 241-255 (SHLVGFHLRQSPSWR). The helical transmembrane segment at 256–276 (VEAVVFSSLNASLDPLLFYFS) threads the bilayer. Over 277-330 (SSVVRRAFGKGLLLLRNPGSSMLGRGAEETVEGTKTDRGGSQTEGAQSSDFVTE) the chain is Cytoplasmic. Residues 300-330 (GRGAEETVEGTKTDRGGSQTEGAQSSDFVTE) are disordered. Residues 302 to 314 (GAEETVEGTKTDR) show a composition bias toward basic and acidic residues. Residues 315-330 (GGSQTEGAQSSDFVTE) show a composition bias toward polar residues.

This sequence belongs to the G-protein coupled receptor 1 family. In terms of assembly, interacts with FCN1 (via Fibrinogen C-terminal domain). Detected in whole wall and separated mucosa in the distal ileum and colon. Expressed by enteroendocrine cells expressing peptide YY (PYY) (at protein level).

It is found in the cell membrane. G protein-coupled receptor that is activated by a major product of dietary fiber digestion, the short chain fatty acids (SCFAs), and that plays a role in the regulation of whole-body energy homeostasis and in intestinal immunity. In omnivorous mammals, the short chain fatty acids acetate, propionate and butyrate are produced primarily by the gut microbiome that metabolizes dietary fibers. SCFAs serve as a source of energy but also act as signaling molecules. That G protein-coupled receptor is probably coupled to the pertussis toxin-sensitive, G(i/o)-alpha family of G proteins but also to the Gq family. Its activation results in the formation of inositol 1,4,5-trisphosphate, the mobilization of intracellular calcium, the phosphorylation of the MAPK3/ERK1 and MAPK1/ERK2 kinases and the inhibition of intracellular cAMP accumulation. May play a role in glucose homeostasis by regulating the secretion of GLP-1, in response to short-chain fatty acids accumulating in the intestine. May also regulate the production of LEP/Leptin, a hormone acting on the central nervous system to inhibit food intake. Finally, may also regulate whole-body energy homeostasis through adipogenesis regulating both differentiation and lipid storage of adipocytes. In parallel to its role in energy homeostasis, may also mediate the activation of the inflammatory and immune responses by SCFA in the intestine, regulating the rapid production of chemokines and cytokines. May also play a role in the resolution of the inflammatory response and control chemotaxis in neutrophils. In addition to SCFAs, may also be activated by the extracellular lectin FCN1 in a process leading to activation of monocytes and inducing the secretion of interleukin-8/IL-8 in response to the presence of microbes. This is Free fatty acid receptor 2 (Ffar2) from Rattus norvegicus (Rat).